Consider the following 85-residue polypeptide: Toxin BmKITc (85 aa).

Residues 1-21 (MKLFLLLVIFASMLNDGLVNA) form the signal peptide. The 61-residue stretch at 22-82 (DGYIRGSDGC…KWKYESNTCG (61 aa)) folds into the LCN-type CS-alpha/beta domain. Intrachain disulfides connect Cys31/Cys81, Cys35/Cys56, Cys42/Cys63, and Cys46/Cys65.

This sequence belongs to the long (4 C-C) scorpion toxin superfamily. Sodium channel inhibitor family. Beta subfamily. In terms of tissue distribution, expressed by the venom gland.

The protein resides in the secreted. Depressant insect beta-toxins cause a transient contraction paralysis followed by a slow flaccid paralysis. They bind voltage-independently at site-4 of sodium channels (Nav) and shift the voltage of activation toward more negative potentials thereby affecting sodium channel activation and promoting spontaneous and repetitive firing. This chain is Toxin BmKITc, found in Olivierus martensii (Manchurian scorpion).